A 199-amino-acid polypeptide reads, in one-letter code: DnaJ homolog subfamily C member 5B (199 aa).

Phosphoserine occurs at positions 14 and 16. The 66-residue stretch at 19–84 (ALYEILGLHK…SKRNIYDKYG (66 aa)) folds into the J domain.

In terms of assembly, interacts with the chaperone complex consisting of HSC70 and SGTA. Post-translationally, palmitoylated.

The protein resides in the membrane. The polypeptide is DnaJ homolog subfamily C member 5B (DNAJC5B) (Bos taurus (Bovine)).